Consider the following 634-residue polypeptide: Sodium-dependent neutral amino acid transporter B(0)AT1 (634 aa).

Over Met-1–Tyr-41 the chain is Cytoplasmic. Position 17 is a phosphoserine (Ser-17). Residues Met-42 to Cys-62 traverse the membrane as a helical segment. Over Gln-63–His-65 the chain is Extracellular. The helical transmembrane segment at Gly-66–Leu-86 threads the bilayer. Topologically, residues His-87–Met-119 are cytoplasmic. A helical transmembrane segment spans residues Phe-120–Phe-140. Over Phe-141–Ser-192 the chain is Extracellular. N-linked (GlcNAc...) asparagine glycosylation is found at Asn-158 and Asn-182. Residues Ile-193 to Ile-213 form a helical membrane-spanning segment. Over Arg-214–Lys-221 the chain is Cytoplasmic. A helical transmembrane segment spans residues Ala-222–Leu-242. Residues Thr-243–Trp-268 are Extracellular-facing. The N-linked (GlcNAc...) asparagine glycan is linked to Asn-258. Residues Leu-269–Phe-289 traverse the membrane as a helical segment. Over Ser-290 to Val-304 the chain is Cytoplasmic. Residues Ile-305–Ile-325 form a helical membrane-spanning segment. Topologically, residues Gly-326 to Ser-413 are extracellular. Asn-354 and Asn-368 each carry an N-linked (GlcNAc...) asparagine glycan. Residues Pro-414 to Gly-434 form a helical membrane-spanning segment. The Cytoplasmic segment spans residues Asn-435–Glu-456. The chain crosses the membrane as a helical span at residues Leu-457–Ser-477. The Extracellular portion of the chain corresponds to Gly-478–Gly-490. Residues Ser-491–Val-511 traverse the membrane as a helical segment. Over Asp-512–Gln-531 the chain is Cytoplasmic. Residues Val-532 to Ile-552 form a helical membrane-spanning segment. At Glu-553–Trp-581 the chain is on the extracellular side. Residues Val-582 to Ile-602 traverse the membrane as a helical segment. The Cytoplasmic portion of the chain corresponds to Tyr-603 to Asn-634. Phosphoserine is present on Ser-627.

This sequence belongs to the sodium:neurotransmitter symporter (SNF) (TC 2.A.22) family. SLC6A19 subfamily. Interacts in a tissue-specific manner with ACE2 in small intestine and with CLTRN in the kidney. Interacts with CLTRN; this interaction is required for trafficking of SLC6A19 to the plasma membrane and for its catalytic activation in kidneys. Interacts with ACE2; this interaction is required for trafficking of SLC6A19 to the plasma membrane and for its catalytic activation in intestine. Interacts with ANPEP; the interaction positively regulates its amino acid transporter activity.

It localises to the membrane. The enzyme catalyses L-alanine(in) + Na(+)(in) = L-alanine(out) + Na(+)(out). It catalyses the reaction L-cysteine(in) + Na(+)(in) = L-cysteine(out) + Na(+)(out). The catalysed reaction is L-glutamine(in) + Na(+)(in) = L-glutamine(out) + Na(+)(out). It carries out the reaction glycine(in) + Na(+)(in) = glycine(out) + Na(+)(out). The enzyme catalyses L-isoleucine(in) + Na(+)(in) = L-isoleucine(out) + Na(+)(out). It catalyses the reaction L-leucine(in) + Na(+)(in) = L-leucine(out) + Na(+)(out). The catalysed reaction is L-methionine(in) + Na(+)(in) = L-methionine(out) + Na(+)(out). It carries out the reaction L-phenylalanine(in) + Na(+)(in) = L-phenylalanine(out) + Na(+)(out). The enzyme catalyses L-serine(in) + Na(+)(in) = L-serine(out) + Na(+)(out). It catalyses the reaction L-tryptophan(in) + Na(+)(in) = L-tryptophan(out) + Na(+)(out). The catalysed reaction is L-tyrosine(in) + Na(+)(in) = L-tyrosine(out) + Na(+)(out). It carries out the reaction L-valine(in) + Na(+)(in) = L-valine(out) + Na(+)(out). Transporter that mediates resorption of neutral amino acids across the apical membrane of renal and intestinal epithelial cells. This uptake is sodium-dependent and chloride-independent. Requires CLTRN in kidney or ACE2 in intestine for cell surface expression and amino acid transporter activity. The polypeptide is Sodium-dependent neutral amino acid transporter B(0)AT1 (Rattus norvegicus (Rat)).